The primary structure comprises 235 residues: Ubiquinone/menaquinone biosynthesis C-methyltransferase UbiE (235 aa).

Positions 59, 84, and 123 each coordinate S-adenosyl-L-methionine.

This sequence belongs to the class I-like SAM-binding methyltransferase superfamily. MenG/UbiE family.

It carries out the reaction a 2-demethylmenaquinol + S-adenosyl-L-methionine = a menaquinol + S-adenosyl-L-homocysteine + H(+). The catalysed reaction is a 2-methoxy-6-(all-trans-polyprenyl)benzene-1,4-diol + S-adenosyl-L-methionine = a 5-methoxy-2-methyl-3-(all-trans-polyprenyl)benzene-1,4-diol + S-adenosyl-L-homocysteine + H(+). Its pathway is quinol/quinone metabolism; menaquinone biosynthesis; menaquinol from 1,4-dihydroxy-2-naphthoate: step 2/2. The protein operates within cofactor biosynthesis; ubiquinone biosynthesis. Its function is as follows. Methyltransferase required for the conversion of demethylmenaquinol (DMKH2) to menaquinol (MKH2) and the conversion of 2-polyprenyl-6-methoxy-1,4-benzoquinol (DDMQH2) to 2-polyprenyl-3-methyl-6-methoxy-1,4-benzoquinol (DMQH2). The protein is Ubiquinone/menaquinone biosynthesis C-methyltransferase UbiE of Campylobacter jejuni subsp. jejuni serotype O:23/36 (strain 81-176).